Consider the following 183-residue polypeptide: A-type ATP synthase subunit E (183 aa).

The protein belongs to the V-ATPase E subunit family. As to quaternary structure, has multiple subunits, A(3), B(3), C, D, E, F, G, I and K(x); there may be a few other subunits as well.

The protein resides in the cell membrane. Component of the A-type ATP synthase that produces ATP from ADP in the presence of a proton gradient across the membrane. This chain is A-type ATP synthase subunit E, found in Methanosarcina mazei (strain ATCC BAA-159 / DSM 3647 / Goe1 / Go1 / JCM 11833 / OCM 88) (Methanosarcina frisia).